Here is a 349-residue protein sequence, read N- to C-terminus: Dihydroorotase (349 aa).

Residues H17 and H19 each coordinate Zn(2+). Substrate is bound by residues 19–21 (HLR) and N45. Positions 105, 142, and 180 each coordinate Zn(2+). At K105 the chain carries N6-carboxylysine. H142 serves as a coordination point for substrate. Residue L225 coordinates substrate. Residue D253 participates in Zn(2+) binding. The active site involves D253. H257 and A269 together coordinate substrate.

The protein belongs to the metallo-dependent hydrolases superfamily. DHOase family. Class II DHOase subfamily. In terms of assembly, homodimer. The cofactor is Zn(2+).

It carries out the reaction (S)-dihydroorotate + H2O = N-carbamoyl-L-aspartate + H(+). Its pathway is pyrimidine metabolism; UMP biosynthesis via de novo pathway; (S)-dihydroorotate from bicarbonate: step 3/3. Catalyzes the reversible cyclization of carbamoyl aspartate to dihydroorotate. The polypeptide is Dihydroorotase (Nitrosomonas europaea (strain ATCC 19718 / CIP 103999 / KCTC 2705 / NBRC 14298)).